The chain runs to 428 residues: 3-phosphoshikimate 1-carboxyvinyltransferase (428 aa).

3-phosphoshikimate contacts are provided by Lys-23, Ser-24, and Arg-28. Lys-23 is a phosphoenolpyruvate binding site. Positions 97 and 125 each coordinate phosphoenolpyruvate. Residues Ser-170, Ser-171, Gln-172, Ser-198, Asp-314, Asn-338, and Lys-342 each contribute to the 3-phosphoshikimate site. Gln-172 lines the phosphoenolpyruvate pocket. The active-site Proton acceptor is Asp-314. Phosphoenolpyruvate is bound by residues Arg-346, Arg-388, and Lys-413.

It belongs to the EPSP synthase family. As to quaternary structure, monomer.

It localises to the cytoplasm. The catalysed reaction is 3-phosphoshikimate + phosphoenolpyruvate = 5-O-(1-carboxyvinyl)-3-phosphoshikimate + phosphate. It functions in the pathway metabolic intermediate biosynthesis; chorismate biosynthesis; chorismate from D-erythrose 4-phosphate and phosphoenolpyruvate: step 6/7. Functionally, catalyzes the transfer of the enolpyruvyl moiety of phosphoenolpyruvate (PEP) to the 5-hydroxyl of shikimate-3-phosphate (S3P) to produce enolpyruvyl shikimate-3-phosphate and inorganic phosphate. This Baumannia cicadellinicola subsp. Homalodisca coagulata protein is 3-phosphoshikimate 1-carboxyvinyltransferase.